A 78-amino-acid chain; its full sequence is uncharacterized protein (78 aa).

2 consecutive transmembrane segments (helical) span residues 5–24 and 39–61; these read LALL…IKLM and LWLQ…AGFI.

The protein resides in the cell membrane. This is an uncharacterized protein from Bacillus subtilis (strain 168).